We begin with the raw amino-acid sequence, 755 residues long: MGECPVNHTKSANVAGGGTRNIDWWPNQLRLNILRQHTAASDPFHKEFNYAAAFKSLDYNALKKDLTDLMTNSQDWWPADFGHYGGLFIRMAWHSAGTYRVFDGRGGGGQGQQRFAPLNSWPDNVSLDKARRLLWPIKQKYGNKISWADLMLLTGNVALESMGFKTFGFAGGRPDTWEADESAYWGGETTWLGNEARYAHGQEGIAGKGIVSGDESKKNHTDIHNRDLESPLAAAHMGLIYVNPEGPDGNPDPVAAARDIRVTFGRMAMDDEETVALIAGGHTFGKTHGAAPADNVGAEPEAASIEQQGFGWSNKYGSGKGPDTITSGLEVIWTKNPTKWTNQFFEYLFKYEWELTKSPAGANQWVAKNAEPFIPDAYDPNKKHLPRMLTTDLSLRFDPGFEKISRRFLEHTDQFADAFARAWFKLLHRDMGPRSRWLGPEIPSEVLLWEDPLPPLDHPVIDNNDIAAIKREILATGLAPQKLISTAWASASTFRGSDKRGGANGARIRLAPQKDWKVNNPAQLAEVLGALEDVQKRFNEQATGGKKVSLADVIVLGGVAALEQAAGVSVPFTPGRTDASQEQTDVHSFEHLEPYADGFRNYGHGNDRVKTEQYLVDRAHLLTLTAPELAVLVGGLRVLGANYDGSDHGVFTAQPGKLTNDFFVNLLDPNTEWTNVDGKGEVFEGKDRATGQKKWTGTRADLIFGSHSELRAIAEVYGSADGQEKFVKDFVAAWDKVMNLDRFDLEQGAGSSPKL.

A cross-link (tryptophyl-tyrosyl-methioninium (Trp-Tyr) (with M-267)) is located at residues 93 to 241 (WHSAGTYRVF…LAAAHMGLIY (149 aa)). Catalysis depends on His94, which acts as the Proton acceptor. A cross-link (tryptophyl-tyrosyl-methioninium (Tyr-Met) (with W-93)) is located at residues 241–267 (YVNPEGPDGNPDPVAAARDIRVTFGRM). Residue His282 coordinates heme b.

The protein belongs to the peroxidase family. Peroxidase/catalase subfamily. In terms of assembly, homodimer or homotetramer. Requires heme b as cofactor. Formation of the three residue Trp-Tyr-Met cross-link is important for the catalase, but not the peroxidase activity of the enzyme.

Its subcellular location is the cytoplasm. The enzyme catalyses H2O2 + AH2 = A + 2 H2O. It catalyses the reaction 2 H2O2 = O2 + 2 H2O. Bifunctional enzyme with both catalase and broad-spectrum peroxidase activity. This Podospora anserina (strain S / ATCC MYA-4624 / DSM 980 / FGSC 10383) (Pleurage anserina) protein is Catalase-peroxidase.